A 160-amino-acid chain; its full sequence is Ribosome maturation factor RimP (160 aa).

The protein belongs to the RimP family.

Its subcellular location is the cytoplasm. In terms of biological role, required for maturation of 30S ribosomal subunits. The protein is Ribosome maturation factor RimP of Orientia tsutsugamushi (strain Boryong) (Rickettsia tsutsugamushi).